A 173-amino-acid chain; its full sequence is Bifunctional protein PyrR (173 aa).

Positions 93–105 (VILVDDVLYTGRT) match the PRPP-binding motif.

It belongs to the purine/pyrimidine phosphoribosyltransferase family. PyrR subfamily. Homodimer and homohexamer; in equilibrium.

The catalysed reaction is UMP + diphosphate = 5-phospho-alpha-D-ribose 1-diphosphate + uracil. Functionally, regulates transcriptional attenuation of the pyrimidine nucleotide (pyr) operon by binding in a uridine-dependent manner to specific sites on pyr mRNA. This disrupts an antiterminator hairpin in the RNA and favors formation of a downstream transcription terminator, leading to a reduced expression of downstream genes. In terms of biological role, also displays a weak uracil phosphoribosyltransferase activity which is not physiologically significant. This is Bifunctional protein PyrR from Streptococcus pneumoniae (strain 70585).